A 387-amino-acid polypeptide reads, in one-letter code: 3-ketoacyl-CoA thiolase (387 aa).

Residue cysteine 91 is the Acyl-thioester intermediate of the active site. Catalysis depends on proton acceptor residues histidine 343 and cysteine 373.

It belongs to the thiolase-like superfamily. Thiolase family. Heterotetramer of two alpha chains (FadB) and two beta chains (FadA).

The protein resides in the cytoplasm. It catalyses the reaction an acyl-CoA + acetyl-CoA = a 3-oxoacyl-CoA + CoA. It functions in the pathway lipid metabolism; fatty acid beta-oxidation. Catalyzes the final step of fatty acid oxidation in which acetyl-CoA is released and the CoA ester of a fatty acid two carbons shorter is formed. This Klebsiella pneumoniae subsp. pneumoniae (strain ATCC 700721 / MGH 78578) protein is 3-ketoacyl-CoA thiolase.